A 618-amino-acid chain; its full sequence is Putative ATP-dependent DNA helicase Q1 (618 aa).

Positions 95 to 270 (INAVMSKEDA…KKMLGIPVAI (176 aa)) constitute a Helicase ATP-binding domain. 108 to 115 (LSTGGGKS) contacts ATP. A DEVH box motif is present at residues 214-217 (DEVH). The region spanning 295-443 (CVEKIVRTIK…NLYNMVRYAS (149 aa)) is the Helicase C-terminal domain. Residues cysteine 448, cysteine 466, cysteine 470, and cysteine 473 each contribute to the Zn(2+) site. Residues 586–618 (KGRAEENNRKRKAAVTSSDEEVDVGDDDDVITL) form a disordered region. A compositionally biased stretch (acidic residues) spans 603-618 (SDEEVDVGDDDDVITL).

This sequence belongs to the helicase family. RecQ subfamily. Zn(2+) is required as a cofactor.

Its subcellular location is the nucleus. The enzyme catalyses Couples ATP hydrolysis with the unwinding of duplex DNA by translocating in the 3'-5' direction.. It carries out the reaction ATP + H2O = ADP + phosphate + H(+). Its function is as follows. DNA helicase that may play a role in the repair of DNA that is damaged by ultraviolet light or other mutagens. Exhibits a magnesium-dependent ATP-dependent DNA-helicase activity that unwinds single- and double-stranded DNA in a 3'-5' direction. The chain is Putative ATP-dependent DNA helicase Q1 from Caenorhabditis briggsae.